The primary structure comprises 179 residues: Large ribosomal subunit protein uL5 (179 aa).

Belongs to the universal ribosomal protein uL5 family. As to quaternary structure, part of the 50S ribosomal subunit; part of the 5S rRNA/L5/L18/L25 subcomplex. Contacts the 5S rRNA and the P site tRNA. Forms a bridge to the 30S subunit in the 70S ribosome.

In terms of biological role, this is one of the proteins that bind and probably mediate the attachment of the 5S RNA into the large ribosomal subunit, where it forms part of the central protuberance. In the 70S ribosome it contacts protein S13 of the 30S subunit (bridge B1b), connecting the 2 subunits; this bridge is implicated in subunit movement. Contacts the P site tRNA; the 5S rRNA and some of its associated proteins might help stabilize positioning of ribosome-bound tRNAs. This Thermoanaerobacter sp. (strain X514) protein is Large ribosomal subunit protein uL5.